The primary structure comprises 669 residues: NADH-ubiquinone oxidoreductase chain 5 (669 aa).

Transmembrane regions (helical) follow at residues 3-23, 40-60, 76-96, 113-133, 136-156, 217-237, 250-270, 283-303, 319-339, 340-360, 375-395, 417-437, 461-481, and 619-639; these read LLIVFLPLLGSSVAGFFGRFL, SILSLIAFYEVALGASACYLR, FLFDSLTVVMLIVVTFISSLV, FMCYLSIFTFFMLMLVTGDNF, LFLGWEGVGLASYLLIHFWFT, AISLICILLFIGAVGKSAQIG, TPVSALIHAATMVTAGVFMIA, LIVITFAGAMTSFLAATTGIL, LGYMIFACGISNYSVSVFHLM, NHAFFKALLFLSAGSVIHAMS, FPLTYAMMLIGSLSLIGFPFL, NFAFWLGSISVLFTSYYSFRL, IPMAIPSILLALGSLFVGYLA, and GFVYHYAFAMLLGLTLFVTFF.

It belongs to the complex I subunit 5 family. In terms of assembly, complex I is composed of at least 49 different subunits.

The protein resides in the mitochondrion inner membrane. The catalysed reaction is a ubiquinone + NADH + 5 H(+)(in) = a ubiquinol + NAD(+) + 4 H(+)(out). Functionally, core subunit of the mitochondrial membrane respiratory chain NADH dehydrogenase (Complex I) that is believed to belong to the minimal assembly required for catalysis. Complex I functions in the transfer of electrons from NADH to the respiratory chain. The immediate electron acceptor for the enzyme is believed to be ubiquinone. This chain is NADH-ubiquinone oxidoreductase chain 5 (ND5), found in Arabidopsis thaliana (Mouse-ear cress).